A 670-amino-acid chain; its full sequence is Zinc finger protein 233 (670 aa).

The KRAB domain maps to 8–79 (VTFKDVAVVF…ETEIQGDGCS (72 aa)). The segment at 258–280 (QTSDENGKGLSVGSNLELHQQLH) adopts a C2H2-type 1; degenerate zinc-finger fold. A C2H2-type 2; degenerate zinc finger spans residues 311 to 336 (EKCYRNGDSGEGFSQGSHLQPHQRVS). The segment at 342–364 (YRCQVYARSSNQNSCLPSHELTH) adopts a C2H2-type 3; degenerate zinc-finger fold. The C2H2-type 4; degenerate zinc-finger motif lies at 370–392 (CTCGRCGKGFHHSLDFDIHCVDS). The C2H2-type 5; degenerate zinc-finger motif lies at 398 to 420 (CKCDVYDKGFSQTSQLQAHQRGH). 7 consecutive C2H2-type zinc fingers follow at residues 452–474 (YKCE…QRIH), 480–502 (YKCD…QRVH), 508–530 (YKCD…QRVH), 536–558 (YKCE…QQVH), 564–586 (YKCD…QRVH), 592–614 (YKCE…QRIH), and 620–642 (YKCG…QRVH).

Belongs to the krueppel C2H2-type zinc-finger protein family.

It is found in the nucleus. May be involved in transcriptional regulation. This chain is Zinc finger protein 233 (ZNF233), found in Homo sapiens (Human).